The chain runs to 295 residues: MEKMSRQLPLNPTFIPPPYGVLRSLLENPLKLPLHPEDAFSKEKDKGKKLDDESSSPTVPQSAFLGPTLWDKTLPYDGDTFQLEYMDLEEFLSENGIPPSPSQHDHSPHPPGLQPASSTAPSVMDLSSRATAPLHPGIPSPNCMQSPIRPGQLLPANRNTPSPIDPDTIQVPVGYEPDPADLALSSIPGQEMFDPRKRKFSEEELKPQPMIKKARKVFIPDDLKDDKYWARRRKNNMAAKRSRDARRLKENQIAIRASFLEKENSALRQEVADLRKELGKCKNILAKYEARHGPL.

Residues 36–52 (PEDAFSKEKDKGKKLDD) show a composition bias toward basic and acidic residues. 2 disordered regions span residues 36–76 (PEDA…TLPY) and 92–149 (LSEN…SPIR). The 64-residue stretch at 225-288 (DDKYWARRRK…GKCKNILAKY (64 aa)) folds into the bZIP domain. Residues 227–247 (KYWARRRKNNMAAKRSRDARR) form a basic motif region. Positions 248–255 (LKENQIAI) are leucine-zipper.

The protein belongs to the bZIP family. PAR subfamily. Binds DNA specifically as homodimer or heterodimer with other PAR factors.

The protein resides in the nucleus. This is Hepatic leukemia factor (Hlf) from Mus musculus (Mouse).